A 300-amino-acid polypeptide reads, in one-letter code: Porphobilinogen deaminase (300 aa).

The residue at position 239 (C239) is an S-(dipyrrolylmethanemethyl)cysteine.

This sequence belongs to the HMBS family. In terms of assembly, monomer. Dipyrromethane is required as a cofactor.

It catalyses the reaction 4 porphobilinogen + H2O = hydroxymethylbilane + 4 NH4(+). The protein operates within porphyrin-containing compound metabolism; protoporphyrin-IX biosynthesis; coproporphyrinogen-III from 5-aminolevulinate: step 2/4. Tetrapolymerization of the monopyrrole PBG into the hydroxymethylbilane pre-uroporphyrinogen in several discrete steps. The sequence is that of Porphobilinogen deaminase from Francisella tularensis subsp. tularensis (strain WY96-3418).